Consider the following 89-residue polypeptide: Barrier-to-autointegration factor (89 aa).

Residue Met1 is modified to N-acetylmethionine. Thr2 is modified (N-acetylthreonine; in Barrier-to-autointegration factor, N-terminally processed). Residues Thr2 and Thr3 each carry the phosphothreonine; by VRK1 and VRK2 modification. Ser4 carries the post-translational modification Phosphoserine; by VRK1 and VRK2. The HhH domain occupies Val20–Glu35.

It belongs to the BAF family. As to quaternary structure, homodimer. Heterodimerizes with BANF2. Interacts with ANKLE2/LEM4, leading to decreased phosphorylation by VRK1 and promoting dephosphorylation by protein phosphatase 2A (PP2A). Binds non-specifically to double-stranded DNA, and is found as a hexamer or dodecamer upon DNA binding. Binds to LEM domain-containing nuclear proteins such as LEMD3/MAN1, TMPO/LAP2 and EMD (emerin). Interacts with ANKLE1 (via LEM domain); the interaction may favor BANF1 dimerization. Interacts with CRX and LMNA (lamin-A). Binds linker histone H1.1 and core histones H3. Interacts with LEMD2 (via LEM domain). Interacts with PARP1; interaction takes place in response to oxidative DNA damage. In terms of processing, ser-4 is the major site of phosphorylation as compared to Thr-2 and Thr-3. Phosphorylation on Thr-2; Thr-3 and Ser-4 disrupts its ability to bind DNA and reduces its ability to bind LEM domain-containing proteins. Non phosphorylated BAF seems to enhance binding between EMD and LMNA. Dephosphorylated by protein phosphatase 2A (PP2A) following interaction with ANKLE2/LEM4 during mitotic exit, leading to mitotic nuclear envelope reassembly.

Its subcellular location is the nucleus. The protein resides in the chromosome. It is found in the nucleus envelope. It localises to the cytoplasm. Functionally, non-specific DNA-binding protein that plays key roles in mitotic nuclear reassembly, chromatin organization, DNA damage response, gene expression and intrinsic immunity against foreign DNA. Contains two non-specific double-stranded DNA (dsDNA)-binding sites which promote DNA cross-bridging. Plays a key role in nuclear membrane reformation at the end of mitosis by driving formation of a single nucleus in a spindle-independent manner. Transiently cross-bridges anaphase chromosomes via its ability to bridge distant DNA sites, leading to the formation of a dense chromatin network at the chromosome ensemble surface that limits membranes to the surface. Also acts as a negative regulator of innate immune activation by restricting CGAS activity toward self-DNA upon acute loss of nuclear membrane integrity. Outcompetes CGAS for DNA-binding, thereby preventing CGAS activation and subsequent damaging autoinflammatory responses. Also involved in DNA damage response: interacts with PARP1 in response to oxidative stress, thereby inhibiting the ADP-ribosyltransferase activity of PARP1. Involved in the recognition of exogenous dsDNA in the cytosol: associates with exogenous dsDNA immediately after its appearance in the cytosol at endosome breakdown and is required to avoid autophagy. The chain is Barrier-to-autointegration factor from Mus musculus (Mouse).